The sequence spans 751 residues: Kelch-like protein 1 (751 aa).

Composition is skewed to low complexity over residues 25 to 36 (PSPASSSPAGGS) and 74 to 90 (SSSS…ASSS). Disordered regions lie at residues 25–54 (PSPA…GPSQ), 69–98 (FWKK…LNGT), and 157–184 (SSIQ…SDLD). Positions 170 to 184 (LTSTNHSLTPQSDLD) are enriched in polar residues. The region spanning 215-282 (CDVILIVGNR…AYTGCLELKE (68 aa)) is the BTB domain. Kelch repeat units follow at residues 463 to 509 (TLYA…VIDD), 510 to 556 (KLFV…VLEG), 558 to 603 (IYAV…ALNG), 604 to 650 (KLYS…TCDG), 652 to 703 (LYAV…LLGD), and 704 to 750 (RLYA…VIKQ).

As to expression, highly expressed in brain.

It is found in the cytoplasm. It localises to the cytoskeleton. May play a role in organizing the actin cytoskeleton of the brain cells. In Mus musculus (Mouse), this protein is Kelch-like protein 1 (Klhl1).